The following is a 152-amino-acid chain: MAKRVKVVLNETINKLGFTGDLVEVAPGYARNYLIPKGLGVVATPGILRQVEQRRLKELERLKAEKDAAEARKVALETIGRFVIKKQVGEAEAIFGTVTTQEVADAVEAATNQSLDRRGISLPDIHKTGFYQAQIKLHPEVIATVEVQVAPL.

The protein belongs to the bacterial ribosomal protein bL9 family.

In terms of biological role, binds to the 23S rRNA. This Synechocystis sp. (strain ATCC 27184 / PCC 6803 / Kazusa) protein is Large ribosomal subunit protein bL9.